The following is a 165-amino-acid chain: MSDVENGGEPRQPSVKPANQRGAARLAAVQALYQMDVGGTGVMEVVAEYEAHRLGQEVDGDTYLKADPSWFRSIVSGVVRDQTKIDPLVRSALLEDWPLSRLDATVRAILRAGTFEILERKDVPVAVIVTEYVEIARAFFEHDEPKLVNAVLDRIAKQVRGEAKR.

The segment at 1-20 (MSDVENGGEPRQPSVKPANQ) is disordered.

Belongs to the NusB family.

Functionally, involved in transcription antitermination. Required for transcription of ribosomal RNA (rRNA) genes. Binds specifically to the boxA antiterminator sequence of the ribosomal RNA (rrn) operons. This chain is Transcription antitermination protein NusB, found in Agrobacterium fabrum (strain C58 / ATCC 33970) (Agrobacterium tumefaciens (strain C58)).